Reading from the N-terminus, the 136-residue chain is Blasticidin-S acetyltransferase (136 aa).

One can recognise an N-acetyltransferase domain in the interval Met1–Leu136.

Its function is as follows. Confers resistance to blasticidin S antibiotic. The polypeptide is Blasticidin-S acetyltransferase (bls) (Streptomyces morookaense (Streptoverticillium morookaense)).